The following is a 326-amino-acid chain: DNA-directed RNA polymerase subunit alpha (326 aa).

Residues Met1 to Glu231 form an alpha N-terminal domain (alpha-NTD) region. An alpha C-terminal domain (alpha-CTD) region spans residues Ile247 to Lys326.

This sequence belongs to the RNA polymerase alpha chain family. Homodimer. The RNAP catalytic core consists of 2 alpha, 1 beta, 1 beta' and 1 omega subunit. When a sigma factor is associated with the core the holoenzyme is formed, which can initiate transcription.

It catalyses the reaction RNA(n) + a ribonucleoside 5'-triphosphate = RNA(n+1) + diphosphate. DNA-dependent RNA polymerase catalyzes the transcription of DNA into RNA using the four ribonucleoside triphosphates as substrates. This chain is DNA-directed RNA polymerase subunit alpha, found in Cupriavidus necator (strain ATCC 17699 / DSM 428 / KCTC 22496 / NCIMB 10442 / H16 / Stanier 337) (Ralstonia eutropha).